The following is a 340-amino-acid chain: Glyceraldehyde-3-phosphate dehydrogenase (340 aa).

Residues 11–12 (SI) and Gly-111 each bind NAD(+). A D-glyceraldehyde 3-phosphate-binding site is contributed by 140–142 (SCN). Residue Cys-141 is the Nucleophile of the active site. Arg-169 lines the NAD(+) pocket. 195-196 (HG) contributes to the D-glyceraldehyde 3-phosphate binding site. Gln-303 is an NAD(+) binding site.

Belongs to the glyceraldehyde-3-phosphate dehydrogenase family. Homotetramer.

The protein localises to the cytoplasm. It carries out the reaction D-glyceraldehyde 3-phosphate + phosphate + NADP(+) = (2R)-3-phospho-glyceroyl phosphate + NADPH + H(+). It catalyses the reaction D-glyceraldehyde 3-phosphate + phosphate + NAD(+) = (2R)-3-phospho-glyceroyl phosphate + NADH + H(+). It functions in the pathway carbohydrate degradation; glycolysis; pyruvate from D-glyceraldehyde 3-phosphate: step 1/5. In Methanococcus maripaludis (strain C6 / ATCC BAA-1332), this protein is Glyceraldehyde-3-phosphate dehydrogenase.